The chain runs to 410 residues: F-box protein At5g36730 (410 aa).

Residues 1–46 (MAMSNLPRDLLEEVLSRVPVKSIAAVRSTCKNWNSLTYGQSFTKKL) enclose the F-box domain.

The sequence is that of F-box protein At5g36730 from Arabidopsis thaliana (Mouse-ear cress).